A 126-amino-acid polypeptide reads, in one-letter code: Large ribosomal subunit protein bL19 (126 aa).

Belongs to the bacterial ribosomal protein bL19 family.

This protein is located at the 30S-50S ribosomal subunit interface and may play a role in the structure and function of the aminoacyl-tRNA binding site. The polypeptide is Large ribosomal subunit protein bL19 (Albidiferax ferrireducens (strain ATCC BAA-621 / DSM 15236 / T118) (Rhodoferax ferrireducens)).